The primary structure comprises 431 residues: Chaperone SurA (431 aa).

Residues 1–20 (MKNWRTFILGLALCANGALA) form the signal peptide. PpiC domains follow at residues 171–272 (GAEF…KVND) and 282–382 (VTEV…QLID).

The protein resides in the periplasm. It carries out the reaction [protein]-peptidylproline (omega=180) = [protein]-peptidylproline (omega=0). Chaperone involved in the correct folding and assembly of outer membrane proteins. Recognizes specific patterns of aromatic residues and the orientation of their side chains, which are found more frequently in integral outer membrane proteins. May act in both early periplasmic and late outer membrane-associated steps of protein maturation. This is Chaperone SurA from Sodalis glossinidius (strain morsitans).